The primary structure comprises 65 residues: Translational regulator CsrA (65 aa).

It belongs to the CsrA/RsmA family. As to quaternary structure, homodimer; the beta-strands of each monomer intercalate to form a hydrophobic core, while the alpha-helices form wings that extend away from the core.

Its subcellular location is the cytoplasm. In terms of biological role, a key translational regulator that binds mRNA to regulate translation initiation and/or mRNA stability. Mediates global changes in gene expression, shifting from rapid growth to stress survival by linking envelope stress, the stringent response and the catabolite repression systems. Usually binds in the 5'-UTR; binding at or near the Shine-Dalgarno sequence prevents ribosome-binding, repressing translation, binding elsewhere in the 5'-UTR can activate translation and/or stabilize the mRNA. Its function is antagonized by small RNA(s). This Pseudomonas putida (strain ATCC 47054 / DSM 6125 / CFBP 8728 / NCIMB 11950 / KT2440) protein is Translational regulator CsrA.